Reading from the N-terminus, the 1203-residue chain is ATP-dependent helicase/nuclease subunit A (1203 aa).

One can recognise a UvrD-like helicase ATP-binding domain in the interval 4–472 (VKLTPEQNEA…IRLKENFRSR (469 aa)). Residue 25 to 32 (ASAGSGKT) participates in ATP binding. Positions 503-785 (VQGNISDYPV…RVMTFHKSKG (283 aa)) constitute a UvrD-like helicase C-terminal domain.

The protein belongs to the helicase family. AddA subfamily. In terms of assembly, heterodimer of AddA and AddB/RexB. Requires Mg(2+) as cofactor.

It catalyses the reaction Couples ATP hydrolysis with the unwinding of duplex DNA by translocating in the 3'-5' direction.. It carries out the reaction ATP + H2O = ADP + phosphate + H(+). Its function is as follows. The heterodimer acts as both an ATP-dependent DNA helicase and an ATP-dependent, dual-direction single-stranded exonuclease. Recognizes the chi site generating a DNA molecule suitable for the initiation of homologous recombination. The AddA nuclease domain is required for chi fragment generation; this subunit has the helicase and 3' -&gt; 5' nuclease activities. In Lactococcus lactis subsp. cremoris (strain SK11), this protein is ATP-dependent helicase/nuclease subunit A.